Reading from the N-terminus, the 391-residue chain is Putative 1-acyl-sn-glycerol-3-phosphate acyltransferase acl-12 (391 aa).

2 helical membrane passes run 47 to 67 and 84 to 104; these read FFFM…SLLF and LCAM…ATVT. The HXXXXD motif signature appears at 124–129; sequence HLGLLD.

The protein belongs to the 1-acyl-sn-glycerol-3-phosphate acyltransferase family.

It is found in the membrane. The enzyme catalyses a 1-acyl-sn-glycero-3-phosphate + an acyl-CoA = a 1,2-diacyl-sn-glycero-3-phosphate + CoA. Its pathway is phospholipid metabolism; CDP-diacylglycerol biosynthesis; CDP-diacylglycerol from sn-glycerol 3-phosphate: step 2/3. In terms of biological role, converts lysophosphatidic acid (LPA) into phosphatidic acid by incorporating an acyl moiety at the sn-2 position of the glycerol backbone. This Caenorhabditis elegans protein is Putative 1-acyl-sn-glycerol-3-phosphate acyltransferase acl-12 (acl-12).